Consider the following 581-residue polypeptide: Adenine deaminase (581 aa).

Belongs to the metallo-dependent hydrolases superfamily. Adenine deaminase family. Requires Mn(2+) as cofactor.

It carries out the reaction adenine + H2O + H(+) = hypoxanthine + NH4(+). The chain is Adenine deaminase from Clostridium botulinum (strain Eklund 17B / Type B).